The sequence spans 328 residues: Biotin synthase (328 aa).

The region spanning F49–E273 is the Radical SAM core domain. Residues C67, C71, and C74 each coordinate [4Fe-4S] cluster. S110, C142, C201, and R277 together coordinate [2Fe-2S] cluster.

Belongs to the radical SAM superfamily. Biotin synthase family. Homodimer. [4Fe-4S] cluster serves as cofactor. [2Fe-2S] cluster is required as a cofactor.

The catalysed reaction is (4R,5S)-dethiobiotin + (sulfur carrier)-SH + 2 reduced [2Fe-2S]-[ferredoxin] + 2 S-adenosyl-L-methionine = (sulfur carrier)-H + biotin + 2 5'-deoxyadenosine + 2 L-methionine + 2 oxidized [2Fe-2S]-[ferredoxin]. It participates in cofactor biosynthesis; biotin biosynthesis; biotin from 7,8-diaminononanoate: step 2/2. Functionally, catalyzes the conversion of dethiobiotin (DTB) to biotin by the insertion of a sulfur atom into dethiobiotin via a radical-based mechanism. The sequence is that of Biotin synthase from Methanococcus vannielii (strain ATCC 35089 / DSM 1224 / JCM 13029 / OCM 148 / SB).